The sequence spans 389 residues: Formate-dependent phosphoribosylglycinamide formyltransferase (389 aa).

Residues 21–22 (EL) and Glu81 each bind N(1)-(5-phospho-beta-D-ribosyl)glycinamide. Residues Arg113, Lys154, 159-164 (SSGKGQ), 194-197 (EEFI), and Glu202 contribute to the ATP site. Residues 118 to 307 (RLAAEKLGLK…EFEIHVRAIL (190 aa)) enclose the ATP-grasp domain. The Mg(2+) site is built by Glu266 and Glu278. Residues Asp285, Lys353, and 360 to 361 (RR) each bind N(1)-(5-phospho-beta-D-ribosyl)glycinamide.

The protein belongs to the PurK/PurT family. Homodimer.

The enzyme catalyses N(1)-(5-phospho-beta-D-ribosyl)glycinamide + formate + ATP = N(2)-formyl-N(1)-(5-phospho-beta-D-ribosyl)glycinamide + ADP + phosphate + H(+). It participates in purine metabolism; IMP biosynthesis via de novo pathway; N(2)-formyl-N(1)-(5-phospho-D-ribosyl)glycinamide from N(1)-(5-phospho-D-ribosyl)glycinamide (formate route): step 1/1. Functionally, involved in the de novo purine biosynthesis. Catalyzes the transfer of formate to 5-phospho-ribosyl-glycinamide (GAR), producing 5-phospho-ribosyl-N-formylglycinamide (FGAR). Formate is provided by PurU via hydrolysis of 10-formyl-tetrahydrofolate. In Methanocaldococcus jannaschii (strain ATCC 43067 / DSM 2661 / JAL-1 / JCM 10045 / NBRC 100440) (Methanococcus jannaschii), this protein is Formate-dependent phosphoribosylglycinamide formyltransferase.